The following is a 616-amino-acid chain: Dihydroxy-acid dehydratase (616 aa).

Mg(2+) is bound at residue Asp-81. Position 122 (Cys-122) interacts with [2Fe-2S] cluster. Asp-123 and Lys-124 together coordinate Mg(2+). At Lys-124 the chain carries N6-carboxylysine. Cys-195 contacts [2Fe-2S] cluster. Glu-491 contributes to the Mg(2+) binding site. Ser-517 serves as the catalytic Proton acceptor.

Belongs to the IlvD/Edd family. Homodimer. [2Fe-2S] cluster is required as a cofactor. It depends on Mg(2+) as a cofactor.

The catalysed reaction is (2R)-2,3-dihydroxy-3-methylbutanoate = 3-methyl-2-oxobutanoate + H2O. The enzyme catalyses (2R,3R)-2,3-dihydroxy-3-methylpentanoate = (S)-3-methyl-2-oxopentanoate + H2O. The protein operates within amino-acid biosynthesis; L-isoleucine biosynthesis; L-isoleucine from 2-oxobutanoate: step 3/4. It participates in amino-acid biosynthesis; L-valine biosynthesis; L-valine from pyruvate: step 3/4. Functionally, functions in the biosynthesis of branched-chain amino acids. Catalyzes the dehydration of (2R,3R)-2,3-dihydroxy-3-methylpentanoate (2,3-dihydroxy-3-methylvalerate) into 2-oxo-3-methylpentanoate (2-oxo-3-methylvalerate) and of (2R)-2,3-dihydroxy-3-methylbutanoate (2,3-dihydroxyisovalerate) into 2-oxo-3-methylbutanoate (2-oxoisovalerate), the penultimate precursor to L-isoleucine and L-valine, respectively. The chain is Dihydroxy-acid dehydratase from Escherichia coli (strain 55989 / EAEC).